The primary structure comprises 766 residues: MNSSNLNYLDELVKEYLIFRGFTQTNHYFSLEKKGDKLKGFQVDRILEQINIYISSYDINHLVELWNFLDITFFSKIDYNKSNAYNNNNNNNNNYNSNHNSNGSYTSYRNNNNDLQSTIKKLSSSLRKYYVIYAINNNKIDKVKEFFDQYSLELLKDPDWQSWFALPYIRNPQSDPLFEIYFSKTWSEAFSLSLRNFLSTIFKNIPLPKILQFNLERQNRKRLETQVENLLSINEELRSQVDKLEYQNKRDQNNSGSNNNSNNNSNSGFTIGNVSQRKESNVNNFNSGNDLNSSNEREVNSFSRVSKRFEPRSTSSTNIAAMDDDDNKPMIGIGRSRKSISTNSVNSNNNINNNNTSNTNTNTNTNTNTNTNSNSNTNTNTNSNSNTNTSNNNSNSNNNNNGTNTNVTNNNGFQHLNLSGFEMTEIDENGFKKKSSNGLNGSDGIENGELVYNIESQEVCTSHSSAITRCKFLSNGSKIASSSIDGTVRLWNVGFSSRQTTIYCLSEVASLEWENRSKLLLCGTIDSKIKIWNSLTDKAIGDINTSIEFPRVEDIACNPNGNSFATSSINNGRTDGVVYTWNLRTLKTEEKLSSSGAVINSMSFNSTGTLLSTGCVDGTIRIFDIKSGSPIAGWQAHSNEILSVQFSSDENRLYSLGKDGKLYQWNIHSMGKPVKEYDYPGFLVDPHRTTKISFNHNQSSFLVGTNNKFALLYNIDQSSPILQISGHTGPVVTCDWNSSSQSDVIITGSLDKTIRLTKLSKSFNNL.

2 disordered regions span residues 88–108 (NNNN…YTSY) and 249–415 (KRDQ…GFQH). Low complexity predominate over residues 253-268 (NNSGSNNNSNNNSNSG). Positions 269–304 (FTIGNVSQRKESNVNNFNSGNDLNSSNEREVNSFSR) are enriched in polar residues. A compositionally biased stretch (low complexity) spans 339 to 412 (SISTNSVNSN…TNTNVTNNNG (74 aa)). WD repeat units lie at residues 462–501 (SHSS…RQTT), 503–542 (YCLS…AIGD), 547–591 (IEFP…TEEK), 594–633 (SSGA…PIAG), 636–675 (AHSN…KPVK), 684–723 (VDPH…PILQ), and 726–766 (GHTG…FNNL).

Belongs to the WD repeat WDR91 family.

It localises to the early endosome membrane. The protein resides in the late endosome membrane. In terms of biological role, functions as a negative regulator of the PI3 kinase/PI3K activity associated with endosomal membranes. By modifying the phosphatidylinositol 3-phosphate/PtdInsP3 content of endosomal membranes may regulate endosome fusion, recycling, sorting and early to late endosome transport. The sequence is that of WD repeat-containing protein 91 homolog (wdr91) from Dictyostelium discoideum (Social amoeba).